Reading from the N-terminus, the 282-residue chain is HTH-type transcriptional activator RhaR (282 aa).

The HTH araC/xylS-type domain maps to 179 to 277 (DKLITRLAAS…GMTPSQWRHL (99 aa)). 2 DNA-binding regions (H-T-H motif) span residues 196 to 217 (DKFC…RQQT) and 244 to 267 (ISDI…TRET).

Binds DNA as a dimer.

It localises to the cytoplasm. In terms of biological role, activates expression of the rhaSR operon in response to L-rhamnose. This chain is HTH-type transcriptional activator RhaR, found in Escherichia coli O139:H28 (strain E24377A / ETEC).